A 69-amino-acid chain; its full sequence is Cell division protein ZapB (69 aa).

Residues 3–60 are a coiled coil; sequence LELFNQLEQKVQNAVETIEMLKMEAEELREENTRLKQERDEWERRLNGLLGKFQEIED.

The protein belongs to the ZapB family. Homodimer. The ends of the coiled-coil dimer bind to each other, forming polymers. Interacts with FtsZ.

The protein localises to the cytoplasm. In terms of biological role, non-essential, abundant cell division factor that is required for proper Z-ring formation. It is recruited early to the divisome by direct interaction with FtsZ, stimulating Z-ring assembly and thereby promoting cell division earlier in the cell cycle. Its recruitment to the Z-ring requires functional FtsA or ZipA. The polypeptide is Cell division protein ZapB (Chromohalobacter salexigens (strain ATCC BAA-138 / DSM 3043 / CIP 106854 / NCIMB 13768 / 1H11)).